Consider the following 86-residue polypeptide: Small ribosomal subunit protein bS20 (86 aa).

The tract at residues 1 to 25 (MANIKSAIKRAKTSEKRRVANSQEK) is disordered.

The protein belongs to the bacterial ribosomal protein bS20 family.

Its function is as follows. Binds directly to 16S ribosomal RNA. This is Small ribosomal subunit protein bS20 from Exiguobacterium sp. (strain ATCC BAA-1283 / AT1b).